A 364-amino-acid chain; its full sequence is Fructose-bisphosphate aldolase B (364 aa).

An N-acetylalanine modification is found at A2. At K13 the chain carries N6-succinyllysine. At S36 the chain carries Phosphoserine. T39 carries the phosphothreonine modification. R43 is a beta-D-fructose 1,6-bisphosphate binding site. At T119 the chain carries Phosphothreonine. At K121 the chain carries N6-succinyllysine. At S132 the chain carries Phosphoserine. Catalysis depends on E188, which acts as the Proton acceptor. K230 (schiff-base intermediate with dihydroxyacetone-P) is an active-site residue. Phosphoserine occurs at positions 272, 276, 299, and 301. 272 to 274 (SGG) contributes to the beta-D-fructose 1,6-bisphosphate binding site. Beta-D-fructose 1,6-bisphosphate is bound at residue R304. Position 309 is a phosphoserine (S309). N6-succinyllysine is present on K317.

The protein belongs to the class I fructose-bisphosphate aldolase family. Homotetramer. Interacts with BBS1, BBS2, BBS4 and BBS7. Forms a ternary complex with G6PD and TP53; this interaction is direct.

The protein localises to the cytoplasm. Its subcellular location is the cytosol. It is found in the cytoskeleton. The protein resides in the microtubule organizing center. It localises to the centrosome. The protein localises to the centriolar satellite. It catalyses the reaction beta-D-fructose 1,6-bisphosphate = D-glyceraldehyde 3-phosphate + dihydroxyacetone phosphate. It carries out the reaction beta-D-fructose 1-phosphate = D-glyceraldehyde + dihydroxyacetone phosphate. Its pathway is carbohydrate degradation; glycolysis; D-glyceraldehyde 3-phosphate and glycerone phosphate from D-glucose: step 4/4. The protein operates within carbohydrate biosynthesis; gluconeogenesis. It participates in carbohydrate metabolism; fructose metabolism. Catalyzes the aldol cleavage of fructose 1,6-biphosphate to form two triosephosphates dihydroxyacetone phosphate and D-glyceraldehyde 3-phosphate in glycolysis as well as the reverse stereospecific aldol addition reaction in gluconeogenesis. In fructolysis, metabolizes fructose 1-phosphate derived from the phosphorylation of dietary fructose by fructokinase into dihydroxyacetone phosphate and D-glyceraldehyde. Acts as an adapter independently of its enzymatic activity, exerts a tumor suppressor role by stabilizing the ternary complex with G6PD and TP53 to inhibit G6PD activity and keep oxidative pentose phosphate metabolism in check. In Ovis aries (Sheep), this protein is Fructose-bisphosphate aldolase B (ALDOB).